The primary structure comprises 196 residues: Ribonuclease HII (196 aa).

Positions 4 to 196 (IWVCGVDEAG…PVRRVLEGSF (193 aa)) constitute an RNase H type-2 domain. Asp10, Glu11, and Asp106 together coordinate a divalent metal cation.

Belongs to the RNase HII family. The cofactor is Mn(2+). It depends on Mg(2+) as a cofactor.

The protein resides in the cytoplasm. The enzyme catalyses Endonucleolytic cleavage to 5'-phosphomonoester.. Functionally, endonuclease that specifically degrades the RNA of RNA-DNA hybrids. This Polynucleobacter asymbioticus (strain DSM 18221 / CIP 109841 / QLW-P1DMWA-1) (Polynucleobacter necessarius subsp. asymbioticus) protein is Ribonuclease HII.